A 423-amino-acid polypeptide reads, in one-letter code: Gamma-glutamyl phosphate reductase (423 aa).

This sequence belongs to the gamma-glutamyl phosphate reductase family.

The protein localises to the cytoplasm. The catalysed reaction is L-glutamate 5-semialdehyde + phosphate + NADP(+) = L-glutamyl 5-phosphate + NADPH + H(+). The protein operates within amino-acid biosynthesis; L-proline biosynthesis; L-glutamate 5-semialdehyde from L-glutamate: step 2/2. Catalyzes the NADPH-dependent reduction of L-glutamate 5-phosphate into L-glutamate 5-semialdehyde and phosphate. The product spontaneously undergoes cyclization to form 1-pyrroline-5-carboxylate. This is Gamma-glutamyl phosphate reductase from Magnetococcus marinus (strain ATCC BAA-1437 / JCM 17883 / MC-1).